We begin with the raw amino-acid sequence, 100 residues long: Small ribosomal subunit protein uS14c (100 aa).

Belongs to the universal ribosomal protein uS14 family. As to quaternary structure, part of the 30S ribosomal subunit.

The protein resides in the plastid. It localises to the chloroplast. In terms of biological role, binds 16S rRNA, required for the assembly of 30S particles. This Euglena gracilis protein is Small ribosomal subunit protein uS14c.